The sequence spans 789 residues: Zinc finger protein GLIS1 (789 aa).

2 stretches are compositionally biased toward basic and acidic residues: residues 1–16 (MHCE…RPKE) and 63–74 (RAHDLLRPRSPR). Disordered regions lie at residues 1-29 (MHCE…GPVS), 53-93 (LLPR…YGHS), and 278-304 (PPLP…QEGS). The segment covering 80-92 (KTGSGKVNGSYGH) has biased composition (polar residues). Residues 366-391 (QACRWVDCCAAYEQQEELVRHIEKSH) form a C2H2-type 1 zinc finger. A C2H2-type 2; atypical zinc finger spans residues 400–427 (FTCFWAGCVRRYKPFNARYKLLIHMRVH). C2H2-type zinc fingers lie at residues 433 to 457 (NKCM…LRSH), 463 to 487 (YLCQ…QRTH), and 493 to 517 (YACQ…VKAH). Disordered regions lie at residues 506–529 (DPSS…KKLH) and 573–684 (VYPG…QGYQ). Residues 511 to 527 (RKHVKAHSAKEQQVRKK) carry the Bipartite nuclear localization signal motif. The segment covering 648-658 (ASQSQSPGGQS) has biased composition (low complexity).

The protein belongs to the GLI C2H2-type zinc-finger protein family. As to quaternary structure, interacts with KLF4. Interacts with POU5F1 and/or POU5F1B. Interacts with SOX2. As to expression, in the adult, expressed highly in placenta and kidney and at lower levels in the testis, brain, colon, brown fat tissue and thymus. During embryo development, expressed in the frontal nasal region, branchial arches, somites, vibrissal and hair follicles, limb buds, craniofacial regions, ventral part of the tail, intervertebral disks, teeth, eyes and kidney.

It localises to the nucleus. In terms of biological role, acts both as a repressor and an ctivator of transcription. Binds to the consensus sequence 5'-GACCACCCAC-3'. By controlling the expression of genes involved in cell differentiation inhibits the lineage commitment of multipotent cells. Prevents, for instance, the differentiation of multipotent mesenchymal cells into adipocyte and osteoblast. The protein is Zinc finger protein GLIS1 of Mus musculus (Mouse).